The following is a 1040-amino-acid chain: Multidrug resistance protein MdtB (1040 aa).

The next 12 helical transmembrane spans lie at Phe16–Ile36, Leu347–Ala367, Ile369–Leu389, Leu396–Ile416, Ile440–Phe460, Phe472–Pro492, Trp537–Ile557, Leu863–Val883, Phe888–Ala908, Ile911–Val931, Ile968–Val988, and Ile998–Ile1018.

This sequence belongs to the resistance-nodulation-cell division (RND) (TC 2.A.6) family. MdtB subfamily. In terms of assembly, part of a tripartite efflux system composed of MdtA, MdtB and MdtC. MdtB forms a heteromultimer with MdtC.

It localises to the cell inner membrane. In Cronobacter sakazakii (strain ATCC BAA-894) (Enterobacter sakazakii), this protein is Multidrug resistance protein MdtB.